The sequence spans 116 residues: Guanylin (116 aa).

The N-terminal stretch at Met-1–Thr-23 is a signal peptide. A propeptide spanning residues Val-24–Asp-101 is cleaved from the precursor. 3 cysteine pairs are disulfide-bonded: Cys-69–Cys-83, Cys-105–Cys-113, and Cys-108–Cys-116.

The protein belongs to the guanylin family. In terms of tissue distribution, localized in both crypts and villi in the small intestine and to superficial epithelial cells in the colon.

The protein resides in the secreted. Endogenous activator of intestinal guanylate cyclase. It stimulates this enzyme through the same receptor binding region as the heat-stable enterotoxins. This Mus musculus (Mouse) protein is Guanylin (Guca2a).